The primary structure comprises 597 residues: Probable translation initiation factor IF-2 (597 aa).

Positions 13–229 (LRTPIVCVMG…LLGLAQKFLE (217 aa)) constitute a tr-type G domain. Positions 22-29 (GHVDHGKT) are G1. 22–29 (GHVDHGKT) contributes to the GTP binding site. Residues 47–51 (AITQH) form a G2 region. Residues 84–87 (DTPG) are G3. Residues 84–88 (DTPGH) and 138–141 (NKID) each bind GTP. The interval 138 to 141 (NKID) is G4. Positions 206-208 (SAV) are G5.

The protein belongs to the TRAFAC class translation factor GTPase superfamily. Classic translation factor GTPase family. IF-2 subfamily.

Function in general translation initiation by promoting the binding of the formylmethionine-tRNA to ribosomes. Seems to function along with eIF-2. This Methanosarcina acetivorans (strain ATCC 35395 / DSM 2834 / JCM 12185 / C2A) protein is Probable translation initiation factor IF-2.